The chain runs to 488 residues: Phenylalanine--tRNA ligase alpha subunit (488 aa).

Residues Thr315, 354–356, Phe394, and Phe419 contribute to the L-phenylalanine site; that span reads QLD.

It belongs to the class-II aminoacyl-tRNA synthetase family. Phe-tRNA synthetase alpha subunit type 2 subfamily. As to quaternary structure, tetramer of two alpha and two beta subunits. Mg(2+) is required as a cofactor.

It localises to the cytoplasm. It catalyses the reaction tRNA(Phe) + L-phenylalanine + ATP = L-phenylalanyl-tRNA(Phe) + AMP + diphosphate + H(+). The protein is Phenylalanine--tRNA ligase alpha subunit of Pyrobaculum arsenaticum (strain DSM 13514 / JCM 11321 / PZ6).